Here is a 255-residue protein sequence, read N- to C-terminus: Thrombin-like enzyme batroxobin (255 aa).

The signal sequence occupies residues 1 to 18 (MVLIRVIANLLILQVSYA). Positions 19–24 (QKSSEL) are excised as a propeptide. Residues 25–247 (VIGGDECDIN…YLPWIQSIIA (223 aa)) enclose the Peptidase S1 domain. Disulfide bonds link C31–C163, C50–C66, C98–C254, C142–C208, C174–C187, and C198–C223. Active-site charge relay system residues include H65 and D110. N170 carries N-linked (GlcNAc...) asparagine glycosylation. S202 (charge relay system) is an active-site residue. N-linked (GlcNAc...) asparagine glycosylation is present at N249.

It belongs to the peptidase S1 family. Snake venom subfamily. In terms of assembly, monomer. Expressed by the venom gland.

Its subcellular location is the secreted. The catalysed reaction is Selective cleavage of Arg-|-Xaa bond in fibrinogen, to form fibrin, and release fibrinopeptide A. The specificity of further degradation of fibrinogen varies with species origin of the enzyme.. Functionally, thrombin-like snake venom serine protease. Cleaves Arg-Gly bonds in fibrinogen alpha chains (FGA). The chain is Thrombin-like enzyme batroxobin from Bothrops atrox (Barba amarilla).